A 107-amino-acid polypeptide reads, in one-letter code: MAVRLIPTIWLFIVFAVIVSALPSLVSSRKLLEVKKQENLTVREEEKSHMPHVTKTSTLSALPKGKIPNSTPSKKGHAAVFAGKLRSRHLSTVDRYLRSVPSPGVGH.

A signal peptide spans 1–21 (MAVRLIPTIWLFIVFAVIVSA). A propeptide spanning residues 22-92 (LPSLVSSRKL…GKLRSRHLST (71 aa)) is cleaved from the precursor. The N-linked (GlcNAc...) asparagine glycan is linked to asparagine 39. The segment at 43-76 (REEEKSHMPHVTKTSTLSALPKGKIPNSTPSKKG) is disordered. A hydroxyproline mark is found at proline 101 and proline 103.

The protein belongs to the C-terminally encoded plant signaling peptide (CEP) family. In terms of assembly, interacts with CEP receptors (e.g. CEPR1 and CEPR2). Post-translationally, the mature small signaling peptide is generated by proteolytic processing of the longer precursor.

The protein resides in the secreted. Its subcellular location is the extracellular space. The protein localises to the apoplast. Its function is as follows. Extracellular signaling peptide that may regulate primary root growth rate and systemic nitrogen (N)-demand signaling. This chain is Precursor of CEP14, found in Arabidopsis thaliana (Mouse-ear cress).